The primary structure comprises 114 residues: UPF0342 protein LCABL_19440 (114 aa).

The protein belongs to the UPF0342 family.

The protein is UPF0342 protein LCABL_19440 of Lacticaseibacillus casei (strain BL23) (Lactobacillus casei).